The sequence spans 310 residues: Ribose-phosphate pyrophosphokinase (310 aa).

ATP-binding positions include 34 to 36 and 93 to 94; these read DQE and RQ. Mg(2+) contacts are provided by H127 and D167. K190 is a catalytic residue. D-ribose 5-phosphate contacts are provided by residues R192, D216, and 220 to 224; that span reads DSGGT.

Belongs to the ribose-phosphate pyrophosphokinase family. Class I subfamily. Homohexamer. Mg(2+) is required as a cofactor.

The protein localises to the cytoplasm. It catalyses the reaction D-ribose 5-phosphate + ATP = 5-phospho-alpha-D-ribose 1-diphosphate + AMP + H(+). It participates in metabolic intermediate biosynthesis; 5-phospho-alpha-D-ribose 1-diphosphate biosynthesis; 5-phospho-alpha-D-ribose 1-diphosphate from D-ribose 5-phosphate (route I): step 1/1. Its function is as follows. Involved in the biosynthesis of the central metabolite phospho-alpha-D-ribosyl-1-pyrophosphate (PRPP) via the transfer of pyrophosphoryl group from ATP to 1-hydroxyl of ribose-5-phosphate (Rib-5-P). In Brucella melitensis biotype 1 (strain ATCC 23456 / CCUG 17765 / NCTC 10094 / 16M), this protein is Ribose-phosphate pyrophosphokinase.